A 367-amino-acid chain; its full sequence is Queuine tRNA-ribosyltransferase (367 aa).

The Proton acceptor role is filled by Asp92. Residues 92–96 (DSGGF), Asp146, Gln188, and Gly215 contribute to the substrate site. An RNA binding region spans residues 246 to 252 (GVGTPKD). The Nucleophile role is filled by Asp265. Zn(2+) is bound by residues Cys303, Cys305, Cys308, and His334.

It belongs to the queuine tRNA-ribosyltransferase family. Homodimer. Within each dimer, one monomer is responsible for RNA recognition and catalysis, while the other monomer binds to the replacement base PreQ1. It depends on Zn(2+) as a cofactor.

The catalysed reaction is 7-aminomethyl-7-carbaguanine + guanosine(34) in tRNA = 7-aminomethyl-7-carbaguanosine(34) in tRNA + guanine. Its pathway is tRNA modification; tRNA-queuosine biosynthesis. In terms of biological role, catalyzes the base-exchange of a guanine (G) residue with the queuine precursor 7-aminomethyl-7-deazaguanine (PreQ1) at position 34 (anticodon wobble position) in tRNAs with GU(N) anticodons (tRNA-Asp, -Asn, -His and -Tyr). Catalysis occurs through a double-displacement mechanism. The nucleophile active site attacks the C1' of nucleotide 34 to detach the guanine base from the RNA, forming a covalent enzyme-RNA intermediate. The proton acceptor active site deprotonates the incoming PreQ1, allowing a nucleophilic attack on the C1' of the ribose to form the product. After dissociation, two additional enzymatic reactions on the tRNA convert PreQ1 to queuine (Q), resulting in the hypermodified nucleoside queuosine (7-(((4,5-cis-dihydroxy-2-cyclopenten-1-yl)amino)methyl)-7-deazaguanosine). This chain is Queuine tRNA-ribosyltransferase, found in Francisella tularensis subsp. novicida (strain U112).